The chain runs to 450 residues: tRNA modification GTPase MnmE (450 aa).

Residues Arg20, Glu78, and Lys117 each contribute to the (6S)-5-formyl-5,6,7,8-tetrahydrofolate site. A TrmE-type G domain is found at 211-372; sequence GLRMVIVGKP…LEESIYRETQ (162 aa). Asn221 is a K(+) binding site. GTP contacts are provided by residues 221 to 226, 240 to 246, 265 to 268, 326 to 329, and 353 to 355; these read NVGKST, TDIPGTT, DTAG, NKVD, and SAL. Ser225 lines the Mg(2+) pocket. K(+)-binding residues include Thr240, Ile242, and Thr245. Residue Thr246 coordinates Mg(2+). Lys450 lines the (6S)-5-formyl-5,6,7,8-tetrahydrofolate pocket.

Belongs to the TRAFAC class TrmE-Era-EngA-EngB-Septin-like GTPase superfamily. TrmE GTPase family. In terms of assembly, homodimer. Heterotetramer of two MnmE and two MnmG subunits. K(+) serves as cofactor.

It is found in the cytoplasm. Exhibits a very high intrinsic GTPase hydrolysis rate. Involved in the addition of a carboxymethylaminomethyl (cmnm) group at the wobble position (U34) of certain tRNAs, forming tRNA-cmnm(5)s(2)U34. In Thermotoga maritima (strain ATCC 43589 / DSM 3109 / JCM 10099 / NBRC 100826 / MSB8), this protein is tRNA modification GTPase MnmE.